The sequence spans 608 residues: Malonate--CoA ligase (608 aa).

Belongs to the ATP-dependent AMP-binding enzyme family. In terms of tissue distribution, expressed in flowers.

It is found in the cytoplasm. The protein resides in the nucleus. It catalyses the reaction malonate + ATP + CoA = malonyl-CoA + AMP + diphosphate. Its function is as follows. Malonate--CoA ligase that catalyzes the formation of malonyl-CoA directly from malonate and CoA. May be required for the detoxification of malonate. In Arabidopsis thaliana (Mouse-ear cress), this protein is Malonate--CoA ligase (AAE13).